Here is a 1052-residue protein sequence, read N- to C-terminus: CCAAT/enhancer-binding protein zeta (1052 aa).

Disordered stretches follow at residues 1–40 (MSADQEPVAFLAKQPWRPKQVTEDPDEEDEEDGDEGKNGF), 122–158 (VENKKQKATEGKKTSEKKVKNKTVAEQRPESCPVSKA), and 621–677 (SQLD…AEKP). The span at 23-34 (EDPDEEDEEDGD) shows a compositional bias: acidic residues. A compositionally biased stretch (basic and acidic residues) spans 122–150 (VENKKQKATEGKKTSEKKVKNKTVAEQRP). Residues 627 to 643 (PESDEENFVDVGDDSDD) show a composition bias toward acidic residues. Residues Ser-629 and Ser-641 each carry the phosphoserine modification. The segment covering 644-677 (EKFTDADKGTATDAVKEVESKETEPESSAEAEKP) has biased composition (basic and acidic residues). Position 837 is a phosphoserine (Ser-837). The segment at 876–969 (KGAKADLEDS…QGQKKKKKSF (94 aa)) is disordered. Acidic residues predominate over residues 883–932 (EDSESSDGELGDLDDDEVSLGSMNDEDFEIDEDGGTFMDVSDDESEDAPE). A phosphoserine mark is found at Ser-958, Ser-972, and Ser-977. Residues 1032–1052 (KKKKNFRKKMKAPQKPKRQRK) are disordered.

This sequence belongs to the CBF/MAK21 family. In terms of tissue distribution, ubiquitous.

The protein localises to the nucleus. Stimulates transcription from the HSP70 promoter. This is CCAAT/enhancer-binding protein zeta (Cebpz) from Mus musculus (Mouse).